We begin with the raw amino-acid sequence, 295 residues long: MSSSRPVFRSRWLPYLLVAPQLVITVIFFIWPAGEALWYSLQSVDPFGFSSQFVGLENFVALFHDSYYLDAFWTTIKFSALVTFSGLLVSLFFAALVDYVVRGSRFYQTLMLLPYAVAPAVAAVLWIFLFNPGRGLITHFLGEFGYDWNHAQNSGQAMFLVVFASVWKQISYNFLFFFAALQSIPRSLVEAAAIDGAGPIRRFFRLSLPLIAPVSFFLLVVNLVYAFFDTFPVIDAATAGGPVQATTTLIYKIYCEGFTGLDLSASAAQSVVLMFLVIILTVVQFRYVESKVRYQ.

Residues 1–11 (MSSSRPVFRSR) are Cytoplasmic-facing. A helical membrane pass occupies residues 12–32 (WLPYLLVAPQLVITVIFFIWP). Residues 33–80 (AGEALWYSLQSVDPFGFSSQFVGLENFVALFHDSYYLDAFWTTIKFSA) lie on the Periplasmic side of the membrane. Residues 76–284 (IKFSALVTFS…FLVIILTVVQ (209 aa)) form the ABC transmembrane type-1 domain. Residues 81–101 (LVTFSGLLVSLFFAALVDYVV) form a helical membrane-spanning segment. Over 102-109 (RGSRFYQT) the chain is Cytoplasmic. Residues 110–130 (LMLLPYAVAPAVAAVLWIFLF) traverse the membrane as a helical segment. The Periplasmic segment spans residues 131-157 (NPGRGLITHFLGEFGYDWNHAQNSGQA). The helical transmembrane segment at 158–178 (MFLVVFASVWKQISYNFLFFF) threads the bilayer. Residues 179-207 (AALQSIPRSLVEAAAIDGAGPIRRFFRLS) lie on the Cytoplasmic side of the membrane. The chain crosses the membrane as a helical span at residues 208–228 (LPLIAPVSFFLLVVNLVYAFF). Over 229-262 (DTFPVIDAATAGGPVQATTTLIYKIYCEGFTGLD) the chain is Periplasmic. A helical transmembrane segment spans residues 263 to 283 (LSASAAQSVVLMFLVIILTVV). Topologically, residues 284–295 (QFRYVESKVRYQ) are cytoplasmic.

Belongs to the binding-protein-dependent transport system permease family. UgpAE subfamily. The complex is composed of two ATP-binding proteins (UgpC), two transmembrane proteins (UgpA and UgpE) and a solute-binding protein (UgpB).

Its subcellular location is the cell inner membrane. Part of the ABC transporter complex UgpBAEC involved in sn-glycerol-3-phosphate (G3P) import. Probably responsible for the translocation of the substrate across the membrane. In Salmonella typhi, this protein is sn-glycerol-3-phosphate transport system permease protein UgpA (ugpA).